The chain runs to 616 residues: Chaperone protein HscA (616 aa).

The protein belongs to the heat shock protein 70 family.

Functionally, chaperone involved in the maturation of iron-sulfur cluster-containing proteins. Has a low intrinsic ATPase activity which is markedly stimulated by HscB. Involved in the maturation of IscU. This Klebsiella pneumoniae subsp. pneumoniae (strain ATCC 700721 / MGH 78578) protein is Chaperone protein HscA.